A 160-amino-acid polypeptide reads, in one-letter code: Phosphopantetheine adenylyltransferase (160 aa).

Thr-10 lines the substrate pocket. Residues 10–11 (TF) and His-18 each bind ATP. Residues Lys-42, Leu-74, and Arg-88 each contribute to the substrate site. ATP-binding positions include 89–91 (GLR), Glu-99, and 124–130 (NSFISST).

This sequence belongs to the bacterial CoaD family. In terms of assembly, homohexamer. Requires Mg(2+) as cofactor.

The protein resides in the cytoplasm. The enzyme catalyses (R)-4'-phosphopantetheine + ATP + H(+) = 3'-dephospho-CoA + diphosphate. The protein operates within cofactor biosynthesis; coenzyme A biosynthesis; CoA from (R)-pantothenate: step 4/5. Its function is as follows. Reversibly transfers an adenylyl group from ATP to 4'-phosphopantetheine, yielding dephospho-CoA (dPCoA) and pyrophosphate. The polypeptide is Phosphopantetheine adenylyltransferase (Pseudoalteromonas atlantica (strain T6c / ATCC BAA-1087)).